Here is a 472-residue protein sequence, read N- to C-terminus: Trigger factor (472 aa).

Residues G174–P261 form the PPIase FKBP-type domain. Residues E438–S472 form a disordered region. Positions K439–K451 are enriched in basic and acidic residues.

This sequence belongs to the FKBP-type PPIase family. Tig subfamily.

The protein resides in the cytoplasm. It carries out the reaction [protein]-peptidylproline (omega=180) = [protein]-peptidylproline (omega=0). Functionally, involved in protein export. Acts as a chaperone by maintaining the newly synthesized protein in an open conformation. Functions as a peptidyl-prolyl cis-trans isomerase. The chain is Trigger factor from Prochlorococcus marinus (strain NATL2A).